Consider the following 831-residue polypeptide: Replication restart protein PriA (831 aa).

Positions 304–471 (VLPLQGYHQV…HRHQNDPQRH (168 aa)) constitute a Helicase ATP-binding domain. 317-324 (GVTGSGKT) contributes to the ATP binding site. A DEAH box motif is present at residues 413–416 (DEEH). 8 residues coordinate Zn(2+): cysteine 537, cysteine 540, cysteine 546, cysteine 549, cysteine 568, cysteine 571, cysteine 581, and cysteine 584. The Helicase C-terminal domain maps to 575–735 (EIQPKVCPEC…ELPQREMLNY (161 aa)).

It belongs to the helicase family. PriA subfamily. As to quaternary structure, component of the replication restart primosome. The cofactor is Zn(2+).

It catalyses the reaction Couples ATP hydrolysis with the unwinding of duplex DNA by translocating in the 3'-5' direction.. It carries out the reaction ATP + H2O = ADP + phosphate + H(+). Initiates the restart of stalled replication forks, which reloads the replicative helicase on sites other than the origin of replication. Recognizes and binds to abandoned replication forks and remodels them to uncover a helicase loading site. Promotes assembly of the primosome at these replication forks. The chain is Replication restart protein PriA from Synechocystis sp. (strain ATCC 27184 / PCC 6803 / Kazusa).